Reading from the N-terminus, the 396-residue chain is G-protein coupled receptor 84 (396 aa).

Over 1 to 26 the chain is Extracellular; that stretch reads MWNSSDANFSCYHESVLGYRYVAVSW. N-linked (GlcNAc...) asparagine glycans are attached at residues Asn-3 and Asn-8. A helical transmembrane segment spans residues 27–47; the sequence is GVVVAVTGTVGNVLTLLALAI. Residues 48–57 are Cytoplasmic-facing; sequence QPKLRTRFNL. A helical membrane pass occupies residues 58 to 78; the sequence is LIANLTLADLLYCTLLQPFSV. Topologically, residues 79-94 are extracellular; sequence DTYLHLHWRTGATFCR. A helical transmembrane segment spans residues 95-115; that stretch reads VFGLLLFASNSVSILTLCLIA. Topologically, residues 116–144 are cytoplasmic; sequence LGRYLLIAHPKLFPQVFSAKGIVLALVST. A helical transmembrane segment spans residues 145-165; that stretch reads WVVGVASFAPLWPIYILVPVV. Residues 166 to 180 lie on the Extracellular side of the membrane; the sequence is CTCSFDRIRGRPYTT. The chain crosses the membrane as a helical span at residues 181–201; sequence ILMGIYFVLGLSSVGIFYCLI. Residues 202 to 320 lie on the Cytoplasmic side of the membrane; that stretch reads HRQVKRAAQA…SSEFGKVTRM (119 aa). Ser-221 and Ser-224 each carry phosphoserine. The disordered stretch occupies residues 244–311; sequence RLASGGPSEG…KGARRAPDSS (68 aa). Low complexity predominate over residues 247 to 260; the sequence is SGGPSEGISSEPVS. Phosphothreonine occurs at positions 263 and 264. The helical transmembrane segment at 321–341 threads the bilayer; it reads CFAVFLCFALSYIPFLLLNIL. Residues 342–352 are Extracellular-facing; the sequence is DARVQAPRVVH. Residues 353–373 traverse the membrane as a helical segment; sequence MLAANLTWLNGCINPVLYAAM. Residues 374–396 are Cytoplasmic-facing; the sequence is NRQFRQAYGSILKRGPRSFHRLH.

Belongs to the G-protein coupled receptor 1 family. As to quaternary structure, interacts with ARRB2 and ARR3. In terms of processing, phosphorylated by a subset of GPR84-activating ligands. Constitutively phosphorylated at Ser-221 and Ser-224 in the absence of 2-HTP. By contrast, Thr-263 and Thr-264 are phosphorylated only following prior cell treatment with 2-HTP. As to expression, expressed predominantly in hematopoietic tissues. High levels detected in the bone marrow and lower levels in the peripheral leukocytes and lung. Also expressed in brain, heart, muscle, colon, thymus, spleen, kidney, liver, placenta and intestine. Within the leukocyte population expression is higher in neutrophils and eosinophils relative to T- or B-lymphocytes.

It is found in the cell membrane. Functionally, g protein-coupled receptor that responds endogenously to dietary fatty acids or nutrient, specifically medium-chain free fatty acid (FFA) with carbon chain lengths of C9 to C14. Capric acid (C10:0), undecanoic acid (C11:0) and lauric acid (C12:0) are the most potent agonists. In immune cells, functions as a pro-inflammatory receptor via 6-OAU and promotes the expression of pro-inflammatory mediators such as TNFalpha, IL-6 and IL-12B as well as stimulating chemotactic responses through activation of signaling mediators AKT, ERK and NF-kappa-B. In addition, triggers increased bacterial adhesion and phagocytosis in macrophages and regulates pro-inflammatory function via enhancing NLRP3 inflammasome activation. Also plays an important role in inflammation by modulating neutrophil functions. Mechanistically, promotes neutrophil chemotaxis, reactive oxygen species (ROS) production and degranulation via LYN-AKT/ERK pathway. To regulate ROS, communicates with the two formyl peptide receptors FPR2 and FPR1 to control the NADPH oxidase activity in neutrophils. The sequence is that of G-protein coupled receptor 84 (GPR84) from Homo sapiens (Human).